We begin with the raw amino-acid sequence, 213 residues long: Orotate phosphoribosyltransferase (213 aa).

5-phospho-alpha-D-ribose 1-diphosphate is bound at residue lysine 26. Residue 34–35 coordinates orotate; that stretch reads FF. 5-phospho-alpha-D-ribose 1-diphosphate-binding positions include 72-73, arginine 99, lysine 100, lysine 103, histidine 105, and 124-132; these read YK and DDVITAGTA. Orotate contacts are provided by threonine 128 and arginine 156.

The protein belongs to the purine/pyrimidine phosphoribosyltransferase family. PyrE subfamily. In terms of assembly, homodimer. The cofactor is Mg(2+).

It catalyses the reaction orotidine 5'-phosphate + diphosphate = orotate + 5-phospho-alpha-D-ribose 1-diphosphate. It participates in pyrimidine metabolism; UMP biosynthesis via de novo pathway; UMP from orotate: step 1/2. Functionally, catalyzes the transfer of a ribosyl phosphate group from 5-phosphoribose 1-diphosphate to orotate, leading to the formation of orotidine monophosphate (OMP). This chain is Orotate phosphoribosyltransferase, found in Pseudomonas paraeruginosa (strain DSM 24068 / PA7) (Pseudomonas aeruginosa (strain PA7)).